The chain runs to 198 residues: B9 domain-containing protein 1 (198 aa).

Positions 8 to 126 (FLLNVSGQIE…TIPMFVPESS (119 aa)) constitute a C2 B9-type domain.

Belongs to the B9D family. As to quaternary structure, part of the tectonic-like complex (also named B9 complex).

It localises to the cytoplasm. The protein localises to the cytoskeleton. It is found in the cilium basal body. Functionally, component of the tectonic-like complex, a complex localized at the transition zone of primary cilia and acting as a barrier that prevents diffusion of transmembrane proteins between the cilia and plasma membranes. Required for ciliogenesis and sonic hedgehog/SHH signaling. In Xenopus laevis (African clawed frog), this protein is B9 domain-containing protein 1 (b9d1).